The chain runs to 303 residues: Aspartate carbamoyltransferase catalytic subunit (303 aa).

Carbamoyl phosphate-binding residues include R49 and T50. Residue K77 coordinates L-aspartate. 3 residues coordinate carbamoyl phosphate: R99, H126, and Q129. L-aspartate contacts are provided by R159 and R211. 2 residues coordinate carbamoyl phosphate: S252 and P253.

The protein belongs to the aspartate/ornithine carbamoyltransferase superfamily. ATCase family. As to quaternary structure, heterododecamer (2C3:3R2) of six catalytic PyrB chains organized as two trimers (C3), and six regulatory PyrI chains organized as three dimers (R2).

It catalyses the reaction carbamoyl phosphate + L-aspartate = N-carbamoyl-L-aspartate + phosphate + H(+). Its pathway is pyrimidine metabolism; UMP biosynthesis via de novo pathway; (S)-dihydroorotate from bicarbonate: step 2/3. Its function is as follows. Catalyzes the condensation of carbamoyl phosphate and aspartate to form carbamoyl aspartate and inorganic phosphate, the committed step in the de novo pyrimidine nucleotide biosynthesis pathway. The chain is Aspartate carbamoyltransferase catalytic subunit from Listeria innocua serovar 6a (strain ATCC BAA-680 / CLIP 11262).